The sequence spans 164 residues: ATP synthase subunit b 2 (164 aa).

The helical transmembrane segment at T4 to P24 threads the bilayer.

It belongs to the ATPase B chain family. As to quaternary structure, F-type ATPases have 2 components, F(1) - the catalytic core - and F(0) - the membrane proton channel. F(1) has five subunits: alpha(3), beta(3), gamma(1), delta(1), epsilon(1). F(0) has three main subunits: a(1), b(2) and c(10-14). The alpha and beta chains form an alternating ring which encloses part of the gamma chain. F(1) is attached to F(0) by a central stalk formed by the gamma and epsilon chains, while a peripheral stalk is formed by the delta and b chains.

It is found in the cell inner membrane. F(1)F(0) ATP synthase produces ATP from ADP in the presence of a proton or sodium gradient. F-type ATPases consist of two structural domains, F(1) containing the extramembraneous catalytic core and F(0) containing the membrane proton channel, linked together by a central stalk and a peripheral stalk. During catalysis, ATP synthesis in the catalytic domain of F(1) is coupled via a rotary mechanism of the central stalk subunits to proton translocation. Functionally, component of the F(0) channel, it forms part of the peripheral stalk, linking F(1) to F(0). The polypeptide is ATP synthase subunit b 2 (Bartonella henselae (strain ATCC 49882 / DSM 28221 / CCUG 30454 / Houston 1) (Rochalimaea henselae)).